Reading from the N-terminus, the 246-residue chain is Ubiquinone biosynthesis O-methyltransferase (246 aa).

S-adenosyl-L-methionine-binding residues include R44, G63, D84, and M128.

This sequence belongs to the methyltransferase superfamily. UbiG/COQ3 family.

The catalysed reaction is a 3-demethylubiquinol + S-adenosyl-L-methionine = a ubiquinol + S-adenosyl-L-homocysteine + H(+). The enzyme catalyses a 3-(all-trans-polyprenyl)benzene-1,2-diol + S-adenosyl-L-methionine = a 2-methoxy-6-(all-trans-polyprenyl)phenol + S-adenosyl-L-homocysteine + H(+). It functions in the pathway cofactor biosynthesis; ubiquinone biosynthesis. Functionally, O-methyltransferase that catalyzes the 2 O-methylation steps in the ubiquinone biosynthetic pathway. The polypeptide is Ubiquinone biosynthesis O-methyltransferase (Xylella fastidiosa (strain Temecula1 / ATCC 700964)).